Here is a 94-residue protein sequence, read N- to C-terminus: DNA-binding protein HU (94 aa).

This sequence belongs to the bacterial histone-like protein family.

In terms of biological role, histone-like DNA-binding protein which is capable of wrapping DNA to stabilize it, and thus to prevent its denaturation under extreme environmental conditions. This Xylella fastidiosa (strain 9a5c) protein is DNA-binding protein HU (hup).